Here is a 150-residue protein sequence, read N- to C-terminus: 6,7-dimethyl-8-ribityllumazine synthase (150 aa).

5-amino-6-(D-ribitylamino)uracil is bound by residues Phe-11, Ile-42–Glu-44, and Cys-73–Ile-75. (2S)-2-hydroxy-3-oxobutyl phosphate is bound at residue Glu-78–Ser-79. The active-site Proton donor is His-81. 5-amino-6-(D-ribitylamino)uracil is bound at residue Asn-106. (2S)-2-hydroxy-3-oxobutyl phosphate is bound at residue Arg-120.

Belongs to the DMRL synthase family.

The catalysed reaction is (2S)-2-hydroxy-3-oxobutyl phosphate + 5-amino-6-(D-ribitylamino)uracil = 6,7-dimethyl-8-(1-D-ribityl)lumazine + phosphate + 2 H2O + H(+). It participates in cofactor biosynthesis; riboflavin biosynthesis; riboflavin from 2-hydroxy-3-oxobutyl phosphate and 5-amino-6-(D-ribitylamino)uracil: step 1/2. Catalyzes the formation of 6,7-dimethyl-8-ribityllumazine by condensation of 5-amino-6-(D-ribitylamino)uracil with 3,4-dihydroxy-2-butanone 4-phosphate. This is the penultimate step in the biosynthesis of riboflavin. The protein is 6,7-dimethyl-8-ribityllumazine synthase of Paramagnetospirillum magneticum (strain ATCC 700264 / AMB-1) (Magnetospirillum magneticum).